A 273-amino-acid chain; its full sequence is Hydroxyethylthiazole kinase (273 aa).

M47 is a substrate binding site. ATP is bound by residues R123 and T172. G199 is a binding site for substrate.

Belongs to the Thz kinase family. The cofactor is Mg(2+).

The enzyme catalyses 5-(2-hydroxyethyl)-4-methylthiazole + ATP = 4-methyl-5-(2-phosphooxyethyl)-thiazole + ADP + H(+). It functions in the pathway cofactor biosynthesis; thiamine diphosphate biosynthesis; 4-methyl-5-(2-phosphoethyl)-thiazole from 5-(2-hydroxyethyl)-4-methylthiazole: step 1/1. Catalyzes the phosphorylation of the hydroxyl group of 4-methyl-5-beta-hydroxyethylthiazole (THZ). This chain is Hydroxyethylthiazole kinase, found in Ruminiclostridium cellulolyticum (strain ATCC 35319 / DSM 5812 / JCM 6584 / H10) (Clostridium cellulolyticum).